Consider the following 196-residue polypeptide: ATP-dependent Clp protease proteolytic subunit (196 aa).

The active-site Nucleophile is Ser-96. Residue His-121 is part of the active site.

The protein belongs to the peptidase S14 family. In terms of assembly, fourteen ClpP subunits assemble into 2 heptameric rings which stack back to back to give a disk-like structure with a central cavity, resembling the structure of eukaryotic proteasomes.

It localises to the cytoplasm. The enzyme catalyses Hydrolysis of proteins to small peptides in the presence of ATP and magnesium. alpha-casein is the usual test substrate. In the absence of ATP, only oligopeptides shorter than five residues are hydrolyzed (such as succinyl-Leu-Tyr-|-NHMec, and Leu-Tyr-Leu-|-Tyr-Trp, in which cleavage of the -Tyr-|-Leu- and -Tyr-|-Trp bonds also occurs).. Its function is as follows. Cleaves peptides in various proteins in a process that requires ATP hydrolysis. Has a chymotrypsin-like activity. Plays a major role in the degradation of misfolded proteins. This is ATP-dependent Clp protease proteolytic subunit from Streptococcus suis (strain 98HAH33).